Consider the following 406-residue polypeptide: Prenyltransferase phqJ (406 aa).

The segment covering 1–19 (MTVSTESNFPHGASTQKPQ) has biased composition (polar residues). The segment at 1-23 (MTVSTESNFPHGASTQKPQSAEP) is disordered. Residue E99 participates in brevianamide F binding. 3 residues coordinate dimethylallyl diphosphate: R113, K200, and Y202. Y204 serves as a coordination point for brevianamide F. Dimethylallyl diphosphate is bound by residues K269, Y271, and Y340.

Belongs to the tryptophan dimethylallyltransferase family.

The protein operates within alkaloid biosynthesis. Functionally, prenyltransferase; part of the gene cluster that mediates the biosynthesis of paraherquamide, a fungal indole alkaloid that belongs to a family of natural products containing a characteristic bicyclo[2.2.2]diazaoctane core. The first steps in the biosynthesis of paraherquamide is the production of the beta-methyl-proline precursor from L-isoleucine. They require oxidation of a terminally hydroxylated L-isoleucine to the corresponding aldehyde by enzymes which have still to be identified. Spontaneous cyclization and dehydration would yield the 4-methyl pyrolline-5-carboxylic acid, which is then reduced by the pyrroline-5-carboxylate reductase phqD leading to the beta-methyl-proline precursor. The next step of paraherquamide biosynthesis involves coupling of beta-methyl-proline and L-tryptophan by the bimodular NRPS phqB, to produce a monooxopiperazine intermediate. The reductase (R) domain of phqB utilizes NADPH for hydride transfer to reduce the thioester bond of the T domain-tethered linear dipeptide to a hemithioaminal intermediate, which spontaneously cleaves the C-S bond to release the aldehyde product. This compound undergoes spontaneous cyclization and dehydration to give a dienamine which is reverse prenylated at C-2 by the reverse prenyltransferase phqJ. The other prenyltransferase present in the cluster, phqI may be a redundant gene in the pathway. During biosynthetic assembly, the key step to produce the polycyclic core is catalyzed by the bifunctional reductase and intramolecular [4+2] Diels-Alderase, phqE, resulting in formation of the [2.2.2] diazaoctane intermediate preparaherquamide. Following formation of preparaherquamide, an indole 2,3-epoxidation-initiated pinacol-like rearrangement is catalyzed by the phqK FAD-dependent monooxygenase. The prenyltransferase phqA, the cytochrome P450 monooxygenase phqL, and the FAD-linked oxidoreductase phqH (or the cytochrome P450 monooxygenase phqM), are proposed to be involved in the formation of the pyran ring. The FAD-dependent monooxygenase phqK is likely responsible for generation of the spiro-oxindole, and the N-methylation is likely mediated by the phqN methyltransferase leading to the isolable natural product paraherquamide F. However, the order of these biosynthetic steps has still to be determined. In late-stage paraherquamide biosynthesis, the third P450 monooxygenase, phqO, is probably responsible for the C-14 hydroxylation, transforming paraherquamide F to paraherquamide G, and paraherquamide E to the final product paraherquamide A. The expansion from the 6-membered ring pyran (in paraherquamides F and G) to the 7-membered dioxepin ring (in paraherquamides A and E) represents a poorly understood but intriguing process that probably involves the 2-oxoglutarate-dependent dioxygenase phqC. Finally, the remaining members of the paraherquamide cluster, including phqI as well as phqM (or phqH), do not have a clearly prescribed role and appear to be redundant. The protein is Prenyltransferase phqJ of Penicillium fellutanum.